We begin with the raw amino-acid sequence, 214 residues long: Attacin (214 aa).

A signal peptide spans 1 to 19; it reads MSKSVALLLLCACLASGRH. The propeptide occupies 20-26; it reads VPTRARR.

This sequence belongs to the attacin/sarcotoxin-2 family. As to expression, highest expression in fat body and hemocytes and to a much lesser extent in Malpighian tubules, silk gland and midgut.

The protein localises to the secreted. Its function is as follows. Hemolymph antibacterial protein. Has a wide spectrum of activity against both Gram-positive and Gram-negative bacteria. The chain is Attacin from Bombyx mori (Silk moth).